Reading from the N-terminus, the 374-residue chain is D-amino-acid oxidase 3 (374 aa).

The N-terminal stretch at 1-19 (MVKYDAIILGSGVLGLSIA) is a signal peptide. Residues S11, L14, K34, D35, A46, S47, and G51 each coordinate FAD. A glycan (N-linked (GlcNAc...) asparagine) is linked at N180. Residues C214 and C271 are joined by a disulfide bond. Residues Y229, Y246, and R296 each coordinate (R)-lactate. Residues Y229, Y246, and R296 each coordinate anthranilate. FAD is bound by residues R296, G342, G345, Y346, and Q347. Residues 372–374 (AKL) carry the Microbody targeting signal motif.

It belongs to the DAMOX/DASOX family. The cofactor is FAD.

The protein localises to the peroxisome matrix. It carries out the reaction a D-alpha-amino acid + O2 + H2O = a 2-oxocarboxylate + H2O2 + NH4(+). Its function is as follows. Catalyzes the oxidative deamination of D-amino acids with broad substrate specificity. Enables the organism to utilize D-amino acids as a source of nutrients. Enables the organism to utilize D-asparate and D-glutamate as a nitrogen source and may also contribute to utlization of D-tryptophan, D-tyrosine and D-asparagine as a nitrogen source. Protects the organism from the toxicity of D-amino acids, including from D-glutamate. May play a role in its interaction with the host. The polypeptide is D-amino-acid oxidase 3 (Cryptococcus deuterogattii (strain R265) (Cryptococcus gattii VGII (strain R265))).